A 511-amino-acid chain; its full sequence is MNVTSFAALRAAAQDIVDEMIADPYGLTSPSVYETARMVVSAPWLEGHRQRVEFLLAQQHEDGTWGGPAAYGLLPTLSAVDALLSVAGTQDARRVAGAVESGLAALAGRFPRNVELPDTIAVELLVPWLIEQVDQRLSRMDDRGDLPGRLDLQADTGTLSGIRELLRQNTGIPEKTWHSLEALGAPAVRSGTVTPMGGAVGASPAATSAWLGDPPHTDAAKACLAYLHQTQARHGGPVSGITSISYFELAWVVTALSGSGLDVDIPAQVPDILRTALGANGLSAGPGLPADSDDTSAALHALDLLGKPESVDCLWEYDTGLYFTCFPKERTPSTSTNAHILVALADRRGQGDTRYDHAAERVGGWLVEQQQPDGRWMDKWHASPYYATACGAAAMARLDGPRTSAALDDAIRWVLDTQHADGSWGRWEGTGEETAYALQVLNHRAAPDRPALEAIRAGRAFLSGHVEDDRRNPPLWHDKDLYTPVRVIRAEILGTLAATQRLAEAEKEARA.

A divalent metal cation is bound by residues Asp-291 and Asp-293. The DXDD motif signature appears at 291–294; that stretch reads DSDD.

The protein belongs to the terpene synthase family. In terms of assembly, homodimer. Requires a divalent metal cation as cofactor.

The catalysed reaction is (2E,6E,10E)-geranylgeranyl diphosphate = ent-copalyl diphosphate. It participates in antibiotic biosynthesis. In terms of biological role, involved in viguiepinol biosynthesis. Catalyzes the conversion of geranylgeranyl diphosphate (GGDP) into copalyl diphosphate (ent-CDP). The protein is Ent-copalyl diphosphate synthase of Streptomyces sp. (strain KO-3988).